The chain runs to 529 residues: Peptide chain release factor 3 (529 aa).

The region spanning 11–280 is the tr-type G domain; it reads AKRRTFAIIS…GLVAWAPAPM (270 aa). Residues 20–27, 88–92, and 142–145 contribute to the GTP site; these read SHPDAGKT, DTPGH, and NKLD.

It belongs to the TRAFAC class translation factor GTPase superfamily. Classic translation factor GTPase family. PrfC subfamily.

Its subcellular location is the cytoplasm. Functionally, increases the formation of ribosomal termination complexes and stimulates activities of RF-1 and RF-2. It binds guanine nucleotides and has strong preference for UGA stop codons. It may interact directly with the ribosome. The stimulation of RF-1 and RF-2 is significantly reduced by GTP and GDP, but not by GMP. This Edwardsiella ictaluri (strain 93-146) protein is Peptide chain release factor 3.